A 262-amino-acid polypeptide reads, in one-letter code: Acyl-[acyl-carrier-protein]--UDP-N-acetylglucosamine O-acyltransferase (262 aa).

This sequence belongs to the transferase hexapeptide repeat family. LpxA subfamily. In terms of assembly, homotrimer.

It is found in the cytoplasm. The catalysed reaction is a (3R)-hydroxyacyl-[ACP] + UDP-N-acetyl-alpha-D-glucosamine = a UDP-3-O-[(3R)-3-hydroxyacyl]-N-acetyl-alpha-D-glucosamine + holo-[ACP]. The protein operates within glycolipid biosynthesis; lipid IV(A) biosynthesis; lipid IV(A) from (3R)-3-hydroxytetradecanoyl-[acyl-carrier-protein] and UDP-N-acetyl-alpha-D-glucosamine: step 1/6. Involved in the biosynthesis of lipid A, a phosphorylated glycolipid that anchors the lipopolysaccharide to the outer membrane of the cell. This is Acyl-[acyl-carrier-protein]--UDP-N-acetylglucosamine O-acyltransferase from Burkholderia thailandensis (strain ATCC 700388 / DSM 13276 / CCUG 48851 / CIP 106301 / E264).